Here is a 239-residue protein sequence, read N- to C-terminus: Putative CCR4-associated factor 1 homolog 8 (239 aa).

Asp17, Glu19, Asp133, and Asn204 together coordinate a divalent metal cation.

This sequence belongs to the CAF1 family. As to quaternary structure, component of the CCR4-NOT complex, at least composed of CRR4 and CAF1 proteins. It depends on a divalent metal cation as a cofactor.

It localises to the nucleus. Its subcellular location is the cytoplasm. The catalysed reaction is Exonucleolytic cleavage of poly(A) to 5'-AMP.. Functionally, ubiquitous transcription factor required for a diverse set of processes. It is a component of the CCR4 complex involved in the control of gene expression. This is Putative CCR4-associated factor 1 homolog 8 (CAF1-8) from Arabidopsis thaliana (Mouse-ear cress).